The primary structure comprises 69 residues: Small, acid-soluble spore protein C1 (69 aa).

The protein belongs to the alpha/beta-type SASP family.

SASP are bound to spore DNA. They are double-stranded DNA-binding proteins that cause DNA to change to an a-like conformation. They protect the DNA backbone from chemical and enzymatic cleavage and are thus involved in dormant spore's high resistance to UV light. This chain is Small, acid-soluble spore protein C1 (SASP-C1), found in Priestia megaterium (Bacillus megaterium).